The following is a 182-amino-acid chain: uncharacterized protein (182 aa).

In terms of domain architecture, Macro spans 1–177 (MEFSVGGVEV…KFLEVFKKHL (177 aa)).

This is an uncharacterized protein from Pyrobaculum aerophilum (strain ATCC 51768 / DSM 7523 / JCM 9630 / CIP 104966 / NBRC 100827 / IM2).